The following is a 218-amino-acid chain: Cytidylate kinase (218 aa).

11 to 19 (GPGASGKGT) provides a ligand contact to ATP.

It belongs to the cytidylate kinase family. Type 1 subfamily.

The protein resides in the cytoplasm. The enzyme catalyses CMP + ATP = CDP + ADP. The catalysed reaction is dCMP + ATP = dCDP + ADP. The sequence is that of Cytidylate kinase from Neisseria meningitidis serogroup A / serotype 4A (strain DSM 15465 / Z2491).